The sequence spans 189 residues: Glucose-6-phosphate isomerase (189 aa).

4 residues coordinate Fe cation: His-88, His-90, Glu-97, and His-136.

The protein belongs to the archaeal-type GPI family. As to quaternary structure, homodimer. It depends on Fe cation as a cofactor.

It localises to the cytoplasm. The enzyme catalyses alpha-D-glucose 6-phosphate = beta-D-fructose 6-phosphate. It functions in the pathway carbohydrate degradation; glycolysis; D-glyceraldehyde 3-phosphate and glycerone phosphate from D-glucose: step 2/4. In Pyrococcus horikoshii (strain ATCC 700860 / DSM 12428 / JCM 9974 / NBRC 100139 / OT-3), this protein is Glucose-6-phosphate isomerase (pgiA).